The primary structure comprises 219 residues: Transmembrane protein 179B (219 aa).

A run of 4 helical transmembrane segments spans residues 9–29 (VELL…ATLT), 65–85 (FVAG…FFWV), 98–118 (IGLR…LVSA), and 162–182 (LHTA…ALLL). At Ser-206 the chain carries Phosphoserine.

The protein belongs to the TMEM179 family.

The protein resides in the membrane. The chain is Transmembrane protein 179B (Tmem179b) from Mus musculus (Mouse).